Here is a 1049-residue protein sequence, read N- to C-terminus: Exotoxin PaxA (1049 aa).

Helical transmembrane passes span 246-266 (GLGL…FTLA), 311-331 (GPAA…LSFL), 375-395 (ITTI…ASAG), and 397-417 (LVGA…SGIL). Hemolysin-type calcium-binding repeat units follow at residues 744–761 (KGSK…DDLL), 762–779 (NGND…NDEL), 780–797 (RGDN…NDKL), 798–815 (FGGN…DDEL), 826–843 (RGGK…SDFL), and 844–861 (DGGE…NDFY).

Belongs to the RTX prokaryotic toxin (TC 1.C.11) family.

It localises to the secreted. It is found in the host cell membrane. Functionally, paxA is associated with abortion cases in swine and septicemia in young piglets. Shows cohemolytic activity with the sphingomyelinase of S.aureus but is devoid of direct hemolytic activity. This Pasteurella aerogenes protein is Exotoxin PaxA (paxA).